A 169-amino-acid polypeptide reads, in one-letter code: MFLRAIGRPLLAKVKQTTGIVGLDVVPNARAVLIDLYSKTLKEIQAVPEDEGYRKAVESFTRQRLNVCKEEEDWEMIEKRLGCGQVEELIEEARDELTLIGKMIEWDPWGVPDDYECEVIENDAPIPKHVPQHRPGPLPEQFYKTLEGLIAESKTEIPAATPSDPQLKE.

The N-terminal 11 residues, 1–11 (MFLRAIGRPLL), are a transit peptide targeting the mitochondrion.

It belongs to the complex I NDUFA5 subunit family. In terms of assembly, complex I is composed of at least 49 different subunits.

Its subcellular location is the mitochondrion inner membrane. In terms of biological role, accessory subunit of the mitochondrial membrane respiratory chain NADH dehydrogenase (Complex I), that is believed not to be involved in catalysis. Complex I functions in the transfer of electrons from NADH to the respiratory chain. The immediate electron acceptor for the enzyme is believed to be ubiquinone. The chain is Probable NADH dehydrogenase [ubiquinone] 1 alpha subcomplex subunit 5, mitochondrial from Arabidopsis thaliana (Mouse-ear cress).